A 98-amino-acid polypeptide reads, in one-letter code: MPSIFTNIILAFATALLGTLVFRSHLMSSLLCLEGMMLSLFTLSTLIILNMHLTMSFMMPILLLVFAACEAAIGLALLVMVSNTYGLDYIKNLSLLQC.

A run of 3 helical transmembrane segments spans residues 2 to 22 (PSIF…TLVF), 29 to 49 (SLLC…LIIL), and 61 to 81 (ILLL…LVMV).

It belongs to the complex I subunit 4L family. Core subunit of respiratory chain NADH dehydrogenase (Complex I) which is composed of 45 different subunits.

Its subcellular location is the mitochondrion inner membrane. The enzyme catalyses a ubiquinone + NADH + 5 H(+)(in) = a ubiquinol + NAD(+) + 4 H(+)(out). In terms of biological role, core subunit of the mitochondrial membrane respiratory chain NADH dehydrogenase (Complex I) which catalyzes electron transfer from NADH through the respiratory chain, using ubiquinone as an electron acceptor. Part of the enzyme membrane arm which is embedded in the lipid bilayer and involved in proton translocation. This is NADH-ubiquinone oxidoreductase chain 4L (MT-ND4L) from Avahi laniger (Eastern woolly lemur).